The sequence spans 313 residues: Protein sprouty homolog 2 (313 aa).

Positions 1–14 (METRVQHGSGSQAL) are enriched in polar residues. 2 disordered regions span residues 1–31 (METR…PDLR) and 54–146 (EYTE…VADG). Composition is skewed to basic and acidic residues over residues 17 to 31 (ARRD…PDLR) and 78 to 89 (KSERPHGLPEHR). The segment covering 108–131 (SRSISTVSTGSRSSTRTSTSSNSS) has biased composition (low complexity). Residues 132 to 141 (EQRLLGSSSG) show a composition bias toward polar residues. Positions 175–289 (RCEDCGKCKC…CYDRVNRPGC (115 aa)) constitute an SPR domain.

The protein belongs to the sprouty family. In terms of tissue distribution, brain and interlimb region.

The protein resides in the cytoplasm. The protein localises to the membrane. Acts as an antagonist of FGF-induced retinal lens fiber differentiation. Inhibits TGFB-induced epithelial-to-mesenchymal transition in retinal lens epithelial cells. May play an important role in FGF-mediated patterning of the mid/hindbrain region by acting to modulate the signaling effects of FGF8. In Gallus gallus (Chicken), this protein is Protein sprouty homolog 2 (SPRY2).